Here is a 330-residue protein sequence, read N- to C-terminus: Beta-hexosaminidase (330 aa).

Substrate-binding positions include Asp-62, Arg-70, Arg-130, and 160–161 (KH). His-173 (proton donor/acceptor) is an active-site residue. The active-site Nucleophile is Asp-242.

It belongs to the glycosyl hydrolase 3 family. NagZ subfamily.

The protein localises to the cytoplasm. It catalyses the reaction Hydrolysis of terminal non-reducing N-acetyl-D-hexosamine residues in N-acetyl-beta-D-hexosaminides.. It participates in cell wall biogenesis; peptidoglycan recycling. Plays a role in peptidoglycan recycling by cleaving the terminal beta-1,4-linked N-acetylglucosamine (GlcNAc) from peptide-linked peptidoglycan fragments, giving rise to free GlcNAc, anhydro-N-acetylmuramic acid and anhydro-N-acetylmuramic acid-linked peptides. The chain is Beta-hexosaminidase from Vibrio cholerae serotype O1 (strain ATCC 39541 / Classical Ogawa 395 / O395).